The sequence spans 91 residues: Small ribosomal subunit protein bS20 (91 aa).

A compositionally biased stretch (basic and acidic residues) spans 1–21 (MPLHKSAEKRLRQSARRNERN). Disordered stretches follow at residues 1–25 (MPLH…RARK) and 70–91 (PNKA…MKAE). Basic residues predominate over residues 70–79 (PNKASRKKSQ).

It belongs to the bacterial ribosomal protein bS20 family.

Functionally, binds directly to 16S ribosomal RNA. This is Small ribosomal subunit protein bS20 from Chlorobium phaeobacteroides (strain BS1).